The chain runs to 108 residues: uncharacterized protein (108 aa).

Residues 1 to 10 show a composition bias toward polar residues; the sequence is MSGISLTPVK. Disordered regions lie at residues 1 to 63 and 83 to 108; these read MSGI…RPPR and VLSP…PRTQ. Over residues 33-62 the composition is skewed to basic and acidic residues; sequence YVDRARPSADAKEHCAASDPEEWHSGDRPP.

This is an uncharacterized protein from Gallid herpesvirus 2 (strain Chicken/Md5/ATCC VR-987) (GaHV-2).